The sequence spans 443 residues: NADH-quinone oxidoreductase subunit D 1 (443 aa).

The protein belongs to the complex I 49 kDa subunit family. In terms of assembly, NDH-1 is composed of 14 different subunits. Subunits NuoB, C, D, E, F, and G constitute the peripheral sector of the complex.

The protein resides in the cell membrane. The enzyme catalyses a quinone + NADH + 5 H(+)(in) = a quinol + NAD(+) + 4 H(+)(out). NDH-1 shuttles electrons from NADH, via FMN and iron-sulfur (Fe-S) centers, to quinones in the respiratory chain. The immediate electron acceptor for the enzyme in this species is believed to be a menaquinone. Couples the redox reaction to proton translocation (for every two electrons transferred, four hydrogen ions are translocated across the cytoplasmic membrane), and thus conserves the redox energy in a proton gradient. The protein is NADH-quinone oxidoreductase subunit D 1 of Streptomyces avermitilis (strain ATCC 31267 / DSM 46492 / JCM 5070 / NBRC 14893 / NCIMB 12804 / NRRL 8165 / MA-4680).